An 816-amino-acid polypeptide reads, in one-letter code: Phosphatidylinositol 4-kinase beta (816 aa).

Residues 1-30 (MGDTVVEPTPLKPTSESTPGPAGSNGGSLL) are disordered. Position 2 is an N-acetylglycine (Gly-2). Residues 2 to 68 (GDTVVEPTPL…VKLLHGGVAI (67 aa)) are interaction with ACBD3. A PIK helical domain is found at 52-242 (CQEVLEKVKL…GTKLRKLILS (191 aa)). The segment at 248–318 (AHRKRELPSL…TESIDNSFSS (71 aa)) is disordered. Ser-258 is subject to Phosphoserine. Phosphothreonine is present on Thr-263. Ser-266, Ser-275, Ser-277, Ser-284, and Ser-294 each carry phosphoserine. Composition is skewed to polar residues over residues 278 to 297 (DATASISLSSNLKRTASNPK) and 306 to 318 (SSSTESIDNSFSS). Ser-428 is subject to Phosphoserine. A Phosphothreonine modification is found at Thr-438. Position 511 is a phosphoserine (Ser-511). Phosphothreonine is present on residues Thr-517 and Thr-519. Residues 535-801 (EPWQEKVRRI…MVDGSMRSIT (267 aa)) enclose the PI3K/PI4K catalytic domain. Positions 541 to 547 (VRRIREG) are G-loop. Residues 668-676 (QVKDRHNGN) are catalytic loop. The segment at 687-711 (HIDFGFILSSSPRNLGFETSAFKLT) is activation loop.

Belongs to the PI3/PI4-kinase family. Type III PI4K subfamily. As to quaternary structure, interacts with ARF1 and ARF3 in the Golgi complex, but not with ARF4, ARF5 or ARF6. Interacts with NCS1/FREQ in a calcium-independent manner. Interacts with CALN1/CABP8 and CALN2/CABP7; in a calcium-dependent manner; this interaction competes with NCS1/FREQ binding. Interacts with ACBD3. Interacts with ARMH3, YWHAB, YWHAE, YWHAG, YWHAH, YWHAQ, YWHAZ and SFN. Interacts with GGA2 (via VHS domain); the interaction is important for PI4KB location at the Golgi apparatus membrane. Interacts with ATG9A. Requires Mg(2+) as cofactor. The cofactor is Mn(2+).

The protein localises to the endomembrane system. It localises to the mitochondrion outer membrane. It is found in the rough endoplasmic reticulum membrane. The protein resides in the golgi apparatus. Its subcellular location is the golgi apparatus membrane. It catalyses the reaction a 1,2-diacyl-sn-glycero-3-phospho-(1D-myo-inositol) + ATP = a 1,2-diacyl-sn-glycero-3-phospho-(1D-myo-inositol 4-phosphate) + ADP + H(+). Its activity is regulated as follows. Inhibited by wortmannin. Increased kinase activity upon interaction with NCS1/FREQ. In terms of biological role, phosphorylates phosphatidylinositol (PI) in the first committed step in the production of the second messenger inositol-1,4,5,-trisphosphate (PIP). May regulate Golgi disintegration/reorganization during mitosis, possibly via its phosphorylation. Involved in Golgi-to-plasma membrane trafficking. May play an important role in the inner ear development. This is Phosphatidylinositol 4-kinase beta (PI4KB) from Otolemur garnettii (Small-eared galago).